The sequence spans 288 residues: Pantothenate synthetase (288 aa).

Residue 30–37 (MGNLHNGH) coordinates ATP. His37 serves as the catalytic Proton donor. Residue Gln61 participates in (R)-pantoate binding. Gln61 serves as a coordination point for beta-alanine. 149–152 (GQKD) is an ATP binding site. Gln155 provides a ligand contact to (R)-pantoate. ATP-binding positions include Val178 and 186–189 (LSSR).

Belongs to the pantothenate synthetase family. As to quaternary structure, homodimer.

The protein resides in the cytoplasm. It carries out the reaction (R)-pantoate + beta-alanine + ATP = (R)-pantothenate + AMP + diphosphate + H(+). It participates in cofactor biosynthesis; (R)-pantothenate biosynthesis; (R)-pantothenate from (R)-pantoate and beta-alanine: step 1/1. Functionally, catalyzes the condensation of pantoate with beta-alanine in an ATP-dependent reaction via a pantoyl-adenylate intermediate. The polypeptide is Pantothenate synthetase (Tolumonas auensis (strain DSM 9187 / NBRC 110442 / TA 4)).